Consider the following 710-residue polypeptide: Elongation factor G (710 aa).

In terms of domain architecture, tr-type G spans 8 to 297 (ERVRNIGIAA…AVVDYLPSPI (290 aa)). GTP is bound by residues 17-24 (AHIDAGKT), 96-100 (DTPGH), and 150-153 (NKMD).

It belongs to the TRAFAC class translation factor GTPase superfamily. Classic translation factor GTPase family. EF-G/EF-2 subfamily.

It is found in the cytoplasm. Functionally, catalyzes the GTP-dependent ribosomal translocation step during translation elongation. During this step, the ribosome changes from the pre-translocational (PRE) to the post-translocational (POST) state as the newly formed A-site-bound peptidyl-tRNA and P-site-bound deacylated tRNA move to the P and E sites, respectively. Catalyzes the coordinated movement of the two tRNA molecules, the mRNA and conformational changes in the ribosome. In Synechococcus sp. (strain JA-3-3Ab) (Cyanobacteria bacterium Yellowstone A-Prime), this protein is Elongation factor G.